The primary structure comprises 637 residues: 1-deoxy-D-xylulose-5-phosphate synthase (637 aa).

Thiamine diphosphate contacts are provided by residues H76 and 117–119; that span reads GHS. Position 148 (D148) interacts with Mg(2+). Residues 149–150, N177, Y294, and E381 contribute to the thiamine diphosphate site; that span reads GA. Residue N177 participates in Mg(2+) binding.

Belongs to the transketolase family. DXPS subfamily. As to quaternary structure, homodimer. The cofactor is Mg(2+). Requires thiamine diphosphate as cofactor.

It catalyses the reaction D-glyceraldehyde 3-phosphate + pyruvate + H(+) = 1-deoxy-D-xylulose 5-phosphate + CO2. It functions in the pathway metabolic intermediate biosynthesis; 1-deoxy-D-xylulose 5-phosphate biosynthesis; 1-deoxy-D-xylulose 5-phosphate from D-glyceraldehyde 3-phosphate and pyruvate: step 1/1. In terms of biological role, catalyzes the acyloin condensation reaction between C atoms 2 and 3 of pyruvate and glyceraldehyde 3-phosphate to yield 1-deoxy-D-xylulose-5-phosphate (DXP). This chain is 1-deoxy-D-xylulose-5-phosphate synthase, found in Neisseria gonorrhoeae (strain ATCC 700825 / FA 1090).